A 308-amino-acid polypeptide reads, in one-letter code: Aspartate carbamoyltransferase catalytic subunit (308 aa).

Carbamoyl phosphate contacts are provided by Arg57 and Thr58. Residue Lys86 participates in L-aspartate binding. Carbamoyl phosphate is bound by residues Arg107, His135, and Gln138. L-aspartate-binding residues include Arg168 and Arg229. Positions 268 and 269 each coordinate carbamoyl phosphate.

This sequence belongs to the aspartate/ornithine carbamoyltransferase superfamily. ATCase family. As to quaternary structure, heterooligomer of catalytic and regulatory chains.

The enzyme catalyses carbamoyl phosphate + L-aspartate = N-carbamoyl-L-aspartate + phosphate + H(+). It functions in the pathway pyrimidine metabolism; UMP biosynthesis via de novo pathway; (S)-dihydroorotate from bicarbonate: step 2/3. Its function is as follows. Catalyzes the condensation of carbamoyl phosphate and aspartate to form carbamoyl aspartate and inorganic phosphate, the committed step in the de novo pyrimidine nucleotide biosynthesis pathway. This is Aspartate carbamoyltransferase catalytic subunit from Thermococcus gammatolerans (strain DSM 15229 / JCM 11827 / EJ3).